Consider the following 307-residue polypeptide: Ribosomal RNA small subunit methyltransferase H (307 aa).

S-adenosyl-L-methionine contacts are provided by residues 34–36 (GGH), Asp-54, Phe-79, Asp-101, and Gln-108.

The protein belongs to the methyltransferase superfamily. RsmH family.

Its subcellular location is the cytoplasm. It catalyses the reaction cytidine(1402) in 16S rRNA + S-adenosyl-L-methionine = N(4)-methylcytidine(1402) in 16S rRNA + S-adenosyl-L-homocysteine + H(+). Its function is as follows. Specifically methylates the N4 position of cytidine in position 1402 (C1402) of 16S rRNA. In Ruthia magnifica subsp. Calyptogena magnifica, this protein is Ribosomal RNA small subunit methyltransferase H.